A 483-amino-acid chain; its full sequence is SET domain and MYND-type zinc finger protein 6 (483 aa).

The SET domain occupies 4 to 228; sequence PLIASVILPE…KDEQLFISYI (225 aa). Positions 49, 52, 62, 65, 71, 75, 83, and 87 each coordinate Zn(2+). The MYND-type zinc finger occupies 49–87; the sequence is CSTCTEEKVKTQRCAACKIIHYCSKGCQKADWPFHKLEC.

The protein belongs to the class V-like SAM-binding methyltransferase superfamily.

It localises to the cytoplasm. It is found in the nucleus. This Schizosaccharomyces pombe (strain 972 / ATCC 24843) (Fission yeast) protein is SET domain and MYND-type zinc finger protein 6 (set6).